A 2108-amino-acid chain; its full sequence is Mucin-5B (2108 aa).

The signal sequence occupies residues 1-21; that stretch reads MEIKKERSFWIFCLIWSFCKG. The region spanning 36–203 is the VWFD 1 domain; that stretch reads SECTTWGNFH…KVEDPSEKCP (168 aa). 2 disulfide bridges follow: Cys-38-Cys-166 and Cys-60-Cys-202. The disordered stretch occupies residues 196–219; it reads EDPSEKCPDVRPDDHTGRHPTEDD. Residues 304 to 360 form the TIL 1 domain; sequence CPSNMEYMECGNSCADTCADPERSKICKAPCTDGCFCPPGTILDDLGGKKCVPRDSC. N-linked (GlcNAc...) (complex) asparagine glycosylation is present at Asn-381. In terms of domain architecture, VWFD 2 spans 398–570; the sequence is GSCSIDGGFH…NSWKTRASCF (173 aa). 3 disulfide bridges follow: Cys-400/Cys-534, Cys-422/Cys-569, and Cys-443/Cys-451. N-linked (GlcNAc...) (complex) asparagine glycans are attached at residues Asn-528, Asn-599, Asn-680, and Asn-772. In terms of domain architecture, TIL 2 spans 666-723; the sequence is CPETMVYNYSVKYCNQSCRSLDEPDPLCKVQIAPMEGCGCPEGTYLNDEEECVTPDDC. The region spanning 782–825 is the TIL 3 domain; that stretch reads GSECQKSCKTQDMHCYVTECVSGCMCPDGLVLDGSGGCIPKDQC. Residues 825–897 enclose the VWFC 1 domain; it reads CPCVHGGHFY…DYILAQDFCP (73 aa). Asn-855 is a glycosylation site (N-linked (GlcNAc...) (complex) asparagine). Residues 863-1033 enclose the VWFD 3 domain; it reads GTCTVYGNGH…NSWKITSTCS (171 aa). Cystine bridges form between Cys-865–Cys-997, Cys-887–Cys-1032, Cys-896–Cys-994, and Cys-914–Cys-921. 4 N-linked (GlcNAc...) (complex) asparagine glycosylation sites follow: Asn-1036, Asn-1219, Asn-1371, and Asn-1452. Positions 1429 to 1613 constitute a VWFD 4 domain; it reads CICSGWGNEH…APVSTNRYCN (185 aa). Disulfide bonds link Cys-1431–Cys-1573, Cys-1453–Cys-1612, and Cys-1477–Cys-1485. N-linked (GlcNAc...) (complex) asparagine glycosylation is found at Asn-1567, Asn-1639, Asn-1792, Asn-1807, and Asn-1841. In terms of domain architecture, VWFC 2 spans 1761–1832; sequence CGCTAQDGSV…DPCCTETVCE (72 aa). One can recognise a VWFC 3 domain in the interval 1870–1937; it reads GVCVSEGVEF…KEGQCCSQCQ (68 aa). Asn-1964 is a glycosylation site (N-linked (GlcNAc...) (complex) asparagine). Disulfide bonds link Cys-2010/Cys-2066, Cys-2031/Cys-2080, Cys-2042/Cys-2096, and Cys-2046/Cys-2098. A CTCK domain is found at 2010-2104; it reads CIDLPHKCKR…ECGCVETKCP (95 aa).

Homomultimer; disulfide-linked. The N- and C-terminus mediate their assembly into higher order structures to form filaments. The CTCK domains of two polypeptides associate in the endoplasmic reticulum to generate intermolecularly disulfide-bonded dimers. These dimers progress to the Golgi apparatus, which is a more acidic environment than the endoplasmic reticulum. Under acidic conditions, the N-termini form non-covalent intermolecular interactions that juxtapose assemblies from different CTCK-linked dimers to produce long, disulfide-linked polymers that remain highly compact until secretion. In terms of processing, N-glycosylated. Complex glycosylation with bisecting N-acetylglucosamine. Contains mainly N-acetylglucosamine (3.1-8.5%), mannose (2.9-4.6%), a small amount of galactose (1.1-4.35) and sialic acid (0.3-1.3%). Most abundant glycan is composed of a GlcNAc(2)Man(3) core, a bisecting GlcNAc and another 3 GlcNAc antannae located on the mannoses of the core. Site Asn-1639 exists both in glycosylated and non-glycosylated forms.

It is found in the secreted. Its function is as follows. Ovomucin, the glycoprotein responsible for the gel properties of egg white, is composed for 2 subunits, alpha-ovomucin/MUC5B and beta-ovomucin/MUC6. The chain is Mucin-5B (MUC5B) from Gallus gallus (Chicken).